Here is a 258-residue protein sequence, read N- to C-terminus: Phosphate import ATP-binding protein PstB (258 aa).

The ABC transporter domain occupies 5-247 (LDLKDVNIYY…EKIFSNPTQK (243 aa)). An ATP-binding site is contributed by 37–44 (GPSGCGKS).

Belongs to the ABC transporter superfamily. Phosphate importer (TC 3.A.1.7) family. In terms of assembly, the complex is composed of two ATP-binding proteins (PstB), two transmembrane proteins (PstC and PstA) and a solute-binding protein (PstS).

The protein localises to the cell membrane. It catalyses the reaction phosphate(out) + ATP + H2O = ADP + 2 phosphate(in) + H(+). Functionally, part of the ABC transporter complex PstSACB involved in phosphate import. Responsible for energy coupling to the transport system. This chain is Phosphate import ATP-binding protein PstB, found in Rhodococcus jostii (strain RHA1).